Consider the following 191-residue polypeptide: Cell division protein SepF (191 aa).

The segment covering 153–178 has biased composition (polar residues); it reads FPEEVSPSNISSKKTSPYSLETNTTP. Residues 153–191 form a disordered region; that stretch reads FPEEVSPSNISSKKTSPYSLETNTTPEPAWGESKLSAFS.

This sequence belongs to the SepF family. Homodimer. Interacts with FtsZ.

It is found in the cytoplasm. Cell division protein that is part of the divisome complex and is recruited early to the Z-ring. Probably stimulates Z-ring formation, perhaps through the cross-linking of FtsZ protofilaments. Its function overlaps with FtsA. This is Cell division protein SepF from Prochlorococcus marinus (strain MIT 9515).